We begin with the raw amino-acid sequence, 160 residues long: UPF0262 protein BSUIS_A0274 (160 aa).

It belongs to the UPF0262 family.

This Brucella suis (strain ATCC 23445 / NCTC 10510) protein is UPF0262 protein BSUIS_A0274.